A 49-amino-acid chain; its full sequence is Large ribosomal subunit protein bL33 (49 aa).

This sequence belongs to the bacterial ribosomal protein bL33 family.

The sequence is that of Large ribosomal subunit protein bL33 from Syntrophotalea carbinolica (strain DSM 2380 / NBRC 103641 / GraBd1) (Pelobacter carbinolicus).